We begin with the raw amino-acid sequence, 237 residues long: MQDITQAEAIHWLATQQKITFLTGAGISTASGVPDYRSLKGVYQGIQQPEYLLSRTCLKTEPEKFYQFVKTLYHPDAQPNIIHQKMAQLEQMKRGKIVSQNIDGLHRKAGSQEVVDFHGNLYECYCQTCGATVPWQDYLLSDRHADCHGQIRPAITLYEEGLSEEAIEKAIQAVASADLIVIVGTSFQVHPFCDLIHYKQPTATILAINQTPLFLQQPYYFLEAKAETIFAELTIKE.

A Deacetylase sirtuin-type domain is found at 1–237 (MQDITQAEAI…TIFAELTIKE (237 aa)). NAD(+)-binding residues include A25, T29, R37, Q100, I102, D103, and H118. Nicotinamide contacts are provided by I102 and D103. Residue H118 is the Proton acceptor of the active site. Zn(2+) is bound by residues C126, C129, H144, and C147. The NAD(+) site is built by T185, S186, and N209.

Belongs to the sirtuin family. Class U subfamily.

Its subcellular location is the cytoplasm. The enzyme catalyses N(6)-acetyl-L-lysyl-[protein] + NAD(+) + H2O = 2''-O-acetyl-ADP-D-ribose + nicotinamide + L-lysyl-[protein]. Its function is as follows. NAD-dependent protein deacetylase which modulates the activities of several enzymes which are inactive in their acetylated form. The polypeptide is NAD-dependent protein deacetylase (Enterococcus faecalis (strain ATCC 700802 / V583)).